An 860-amino-acid chain; its full sequence is Elastin (860 aa).

The signal sequence occupies residues 1-27 (MAGLTAVVPQPGVLLILLLNLLHPAQP). Pro35 and Pro72 each carry 4-hydroxyproline. The residue at position 84 (Pro84) is a Hydroxyproline. The residue at position 105 (Pro105) is a 4-hydroxyproline. An allysine mark is found at Lys123 and Lys127. Pro217, Pro230, Pro233, and Pro253 each carry 4-hydroxyproline. Allysine occurs at positions 299, 318, and 321. Residue Pro346 is modified to 4-hydroxyproline. Allysine occurs at positions 368 and 371. Pro383 bears the Hydroxyproline mark. 2 positions are modified to 4-hydroxyproline: Pro399 and Pro405. 2 positions are modified to hydroxyproline: Pro410 and Pro415. 5 positions are modified to allysine: Lys431, Lys435, Lys438, Lys481, and Lys484. Residues Pro498 and Pro519 each carry the 4-hydroxyproline modification. Allysine occurs at positions 534, 595, 599, and 603. A 4-hydroxyproline mark is found at Pro617, Pro626, Pro644, Pro653, and Pro661. Lys668 and Lys671 each carry allysine. Pro702 is subject to 4-hydroxyproline. Allysine is present on residues Lys719, Lys723, Lys783, and Lys786. A 4-hydroxyproline modification is found at Pro832. Cys850 and Cys855 are joined by a disulfide.

It belongs to the elastin family. In terms of assembly, the polymeric elastin chains are cross-linked together into an extensible 3D network. Forms a ternary complex with BGN and MFAP2. Interacts with MFAP2 via divalent cations (calcium &gt; magnesium &gt; manganese) in a dose-dependent and saturating manner. Interacts with FBLN5 and FBN1. Forms a ternary complex with FBN1 and FBLN2 or FBLN5. Interacts with MFAP4 in a Ca (2+)-dependent manner; this interaction promotes ELN self-assembly. Interacts with EFEMP2 with moderate affinity. In terms of processing, elastin is formed through the cross-linking of its soluble precursor tropoelastin. Cross-linking is initiated through the action of lysyl oxidase on exposed lysines to form allysine. Subsequent spontaneous condensation reactions with other allysine or unmodified lysine residues result in various bi-, tri-, and tetrafunctional cross-links. The most abundant cross-links in mature elastin fibers are lysinonorleucine, allysine aldol, desmosine, and isodesmosine. Post-translationally, hydroxylation on proline residues within the sequence motif, GXPG, is most likely to be 4-hydroxy as this fits the requirement for 4-hydroxylation in vertebrates.

It is found in the secreted. Its subcellular location is the extracellular space. The protein localises to the extracellular matrix. Major structural protein of tissues such as aorta and nuchal ligament, which must expand rapidly and recover completely. Molecular determinant of the late arterial morphogenesis, stabilizing arterial structure by regulating proliferation and organization of vascular smooth muscle. The polypeptide is Elastin (Eln) (Mus musculus (Mouse)).